Here is a 397-residue protein sequence, read N- to C-terminus: tRNA(Ile)-lysidine synthase (397 aa).

44-49 (SGGADS) provides a ligand contact to ATP.

This sequence belongs to the tRNA(Ile)-lysidine synthase family.

It is found in the cytoplasm. It catalyses the reaction cytidine(34) in tRNA(Ile2) + L-lysine + ATP = lysidine(34) in tRNA(Ile2) + AMP + diphosphate + H(+). Ligates lysine onto the cytidine present at position 34 of the AUA codon-specific tRNA(Ile) that contains the anticodon CAU, in an ATP-dependent manner. Cytidine is converted to lysidine, thus changing the amino acid specificity of the tRNA from methionine to isoleucine. The polypeptide is tRNA(Ile)-lysidine synthase (Rhodopirellula baltica (strain DSM 10527 / NCIMB 13988 / SH1)).